A 555-amino-acid polypeptide reads, in one-letter code: Phosphoglucomutase (555 aa).

2 residues coordinate alpha-D-glucose 1,6-bisphosphate: arginine 22 and serine 114. Serine 114 (phosphoserine intermediate) is an active-site residue. Residues serine 114, aspartate 279, aspartate 281, and aspartate 283 each coordinate Mg(2+). Serine 114 is modified (phosphoserine). Alpha-D-glucose 1,6-bisphosphate-binding residues include aspartate 283, arginine 284, threonine 347, glutamate 366, serine 368, and lysine 379.

This sequence belongs to the phosphohexose mutase family. As to quaternary structure, monomer. The cofactor is Mg(2+).

It is found in the cytoplasm. It carries out the reaction alpha-D-glucose 1-phosphate = alpha-D-glucose 6-phosphate. It catalyses the reaction O-phospho-L-seryl-[protein] + alpha-D-glucose 1-phosphate = alpha-D-glucose 1,6-bisphosphate + L-seryl-[protein]. The enzyme catalyses alpha-D-glucose 1,6-bisphosphate + L-seryl-[protein] = O-phospho-L-seryl-[protein] + alpha-D-glucose 6-phosphate. Catalyzes the reversible isomerization of alpha-D-glucose 1-phosphate to alpha-D-glucose 6-phosphate. The mechanism proceeds via the intermediate compound alpha-D-glucose 1,6-bisphosphate. Key enzyme in hexose metabolism. The reverse reaction is an essential step for biosynthesis because glucose 1-phosphate is the starting point for the synthesis of UDP-glucose, which acts as a precursor for the synthesis of oligosaccharides and trehalose. This chain is Phosphoglucomutase (pgmA), found in Aspergillus fumigatus (strain ATCC MYA-4609 / CBS 101355 / FGSC A1100 / Af293) (Neosartorya fumigata).